We begin with the raw amino-acid sequence, 349 residues long: NADH-quinone oxidoreductase subunit H (349 aa).

The next 8 helical transmembrane spans lie at 19 to 39 (VWTL…VAYL), 88 to 108 (GLFI…WAVV), 123 to 143 (LLFL…AGWA), 161 to 181 (VSYE…SASL), 202 to 222 (FLSW…ISGI), 249 to 269 (GMAF…VSIL), 284 to 304 (FLPD…FVFL), and 325 to 345 (VFIP…MSPL).

The protein belongs to the complex I subunit 1 family. NDH-1 is composed of 14 different subunits. Subunits NuoA, H, J, K, L, M, N constitute the membrane sector of the complex.

It is found in the cell inner membrane. The catalysed reaction is a quinone + NADH + 5 H(+)(in) = a quinol + NAD(+) + 4 H(+)(out). NDH-1 shuttles electrons from NADH, via FMN and iron-sulfur (Fe-S) centers, to quinones in the respiratory chain. The immediate electron acceptor for the enzyme in this species is believed to be ubiquinone. Couples the redox reaction to proton translocation (for every two electrons transferred, four hydrogen ions are translocated across the cytoplasmic membrane), and thus conserves the redox energy in a proton gradient. This subunit may bind ubiquinone. The protein is NADH-quinone oxidoreductase subunit H of Aromatoleum aromaticum (strain DSM 19018 / LMG 30748 / EbN1) (Azoarcus sp. (strain EbN1)).